We begin with the raw amino-acid sequence, 930 residues long: G patch domain-containing protein TGH (930 aa).

Lysine 25 participates in a covalent cross-link: Glycyl lysine isopeptide (Lys-Gly) (interchain with G-Cter in ubiquitin). The segment at 76–152 (GWAPQSFTSS…PSAIPGPVPD (77 aa)) is disordered. The 41-residue stretch at 159–199 (SESIGVKLLLKMGWRRGHSIKEVRASSDARREARKAFLAFY) folds into the G-patch domain. The SURP motif repeat unit spans residues 405–447 (LIEGFATFVSRCGKLYEDLSREKNQSNQLFDFLREGNGHDYYA). Disordered stretches follow at residues 478-508 (AETR…GSFQ), 687-751 (RQVS…NEAA), and 773-930 (FEVP…RRRD). Residues 489–498 (PLQRSLKETD) are compositionally biased toward basic and acidic residues. Positions 499–508 (TSASSGGSFQ) are enriched in polar residues. The span at 701 to 711 (IEEPEVEVEVE) shows a compositional bias: acidic residues. Over residues 779–808 (EEIKSRSKPEDSSDKRLDRPGLKEKVEEKT) the composition is skewed to basic and acidic residues. The segment covering 848 to 857 (RRKRYNKKDR) has biased composition (basic residues). A compositionally biased stretch (basic and acidic residues) spans 858-877 (HRNDSESDSSSDYHSRDKQG). The span at 892 to 908 (RSSHKKHSKHRRTKKSS) shows a compositional bias: basic residues. The span at 913-923 (SSDEEQKESRR) shows a compositional bias: basic and acidic residues.

As to expression, expressed in vasculature of cotyledons and leaves, young meristematic tissues, trichomes and pistils.

The protein resides in the nucleus speckle. The protein localises to the nucleus. Its subcellular location is the nucleoplasm. Functionally, functions as a component of microRNA (miRNA) and small interfering RNA (siRNA) biogenesis. May assist DCL1 and DCL4 to efficiently process and/or recruit the precursors of miRNAs and siRNAs. In the miRNA biogenesis pathway, associates with the DCL1 complex that processes primary miRNAs (pri-miRNAs) into miRNAs. Binds pri-miRNAs and precursor miRNAs (pre-miRNAs). Is required for the interaction between pri-miRNAs and DRB1. Required for general proper plant growth and, in particular, initiation of vascular development. Interacts genetically with AMP1, a glutamate carboxypeptidase involved in the regulation of meristem function. The protein is G patch domain-containing protein TGH of Arabidopsis thaliana (Mouse-ear cress).